We begin with the raw amino-acid sequence, 206 residues long: Dephospho-CoA kinase (206 aa).

In terms of domain architecture, DPCK spans 4 to 204; it reads IVGLTGGIGS…QFYLQQAENK (201 aa). 12 to 17 contacts ATP; it reads GSGKTT.

It belongs to the CoaE family.

Its subcellular location is the cytoplasm. It catalyses the reaction 3'-dephospho-CoA + ATP = ADP + CoA + H(+). It functions in the pathway cofactor biosynthesis; coenzyme A biosynthesis; CoA from (R)-pantothenate: step 5/5. In terms of biological role, catalyzes the phosphorylation of the 3'-hydroxyl group of dephosphocoenzyme A to form coenzyme A. The polypeptide is Dephospho-CoA kinase (Haemophilus influenzae (strain ATCC 51907 / DSM 11121 / KW20 / Rd)).